A 256-amino-acid polypeptide reads, in one-letter code: Small ribosomal subunit protein uS2 (256 aa).

The stretch at 104–149 forms a coiled coil; sequence NFKTISQRVHRLEELEALFASPEIEERPKKEQVRLKHELERLQKYL.

The protein belongs to the universal ribosomal protein uS2 family. As to quaternary structure, part of the 30S ribosomal subunit. Contacts protein S8.

In terms of biological role, spans the head-body hinge region of the 30S subunit. Is loosely associated with the 30S subunit. This is Small ribosomal subunit protein uS2 (rpsB) from Thermus thermophilus (strain ATCC BAA-163 / DSM 7039 / HB27).